The following is a 364-amino-acid chain: Chorismate synthase (364 aa).

Arginine 47 contacts NADP(+). Residues arginine 125–serine 127, glycine 288, lysine 303–threonine 307, and arginine 329 each bind FMN.

Belongs to the chorismate synthase family. As to quaternary structure, homotetramer. It depends on FMNH2 as a cofactor.

The catalysed reaction is 5-O-(1-carboxyvinyl)-3-phosphoshikimate = chorismate + phosphate. It functions in the pathway metabolic intermediate biosynthesis; chorismate biosynthesis; chorismate from D-erythrose 4-phosphate and phosphoenolpyruvate: step 7/7. Its function is as follows. Catalyzes the anti-1,4-elimination of the C-3 phosphate and the C-6 proR hydrogen from 5-enolpyruvylshikimate-3-phosphate (EPSP) to yield chorismate, which is the branch point compound that serves as the starting substrate for the three terminal pathways of aromatic amino acid biosynthesis. This reaction introduces a second double bond into the aromatic ring system. This is Chorismate synthase from Synechococcus sp. (strain CC9902).